The following is a 557-amino-acid chain: Elongator complex protein 3 (557 aa).

The Radical SAM core domain occupies 91-381 (RTASGIAVVA…YRVQRDIPMP (291 aa)). [4Fe-4S] cluster contacts are provided by C108, C118, and C121. K173 contributes to the acetyl-CoA binding site. Positions 405–557 (TTCRDVRTRE…LDGPYMSKRI (153 aa)) constitute an N-acetyltransferase domain. Residue K453 forms a Glycyl lysine isopeptide (Lys-Gly) (interchain with G-Cter in ubiquitin) linkage. Acetyl-CoA contacts are provided by residues 485 to 488 (ELHV), 508 to 510 (FGT), and Y541.

Belongs to the ELP3 family. Component of the elongator complex which consists of ELP1/IKI3, ELP2, ELP3, ELP4, ELP5/IKI1 and ELP6. The elongator complex is composed of two copies of the Elp123 subcomplex (composed of ELP1/IKI3, ELP2 and ELP3) and two copies of the Elp456 subcomplex (composed of ELP4, ELP5/IKI1 and ELP6). The Elp123 subcomplex forms a two-lobed scaffold, which binds the Elp456 subcomplex asymmetrically. In each lobe, ELP2 is tightly sandwiched between ELP1/IKI3 and ELP3. The Elp123 subcomplex binds tRNA through ELP1/IKI3 and ELP3 and can bind 2 tRNAs simultaneously. tRNA-binding induces conformational rearrangements which precisely position the targeted anticodon base in the active site. ELP3 interacts with KTI11/DPH3. ELP3 interacts with KTI12. The Elp456 subcomplex binds tRNA and has ATPase activity. It depends on [4Fe-4S] cluster as a cofactor.

The protein localises to the cytoplasm. It localises to the nucleus. The catalysed reaction is uridine(34) in tRNA + acetyl-CoA + S-adenosyl-L-methionine + H2O = 5-(carboxymethyl)uridine(34) in tRNA + 5'-deoxyadenosine + L-methionine + CoA + 2 H(+). Its pathway is tRNA modification; 5-methoxycarbonylmethyl-2-thiouridine-tRNA biosynthesis. In terms of biological role, catalytic tRNA acetyltransferase subunit of the elongator complex which is required for multiple tRNA modifications, including mcm5U (5-methoxycarbonylmethyl uridine), mcm5s2U (5-methoxycarbonylmethyl-2-thiouridine), and ncm5U (5-carbamoylmethyl uridine). In the elongator complex, acts as a tRNA uridine(34) acetyltransferase, which mediates formation of carboxymethyluridine in the wobble base at position 34 in tRNAs. The complex functions as a gamma-toxin target (TOT); disruption of the complex confers resistance to Kluyveromyces lactis toxin zymocin (pGKL1 killer toxin). May also be involved in sensitivity to Pichia inositovora toxin. Independently, ELP3 may be involved in polarized exocytosis. The polypeptide is Elongator complex protein 3 (Saccharomyces cerevisiae (strain ATCC 204508 / S288c) (Baker's yeast)).